The primary structure comprises 556 residues: Arginine--tRNA ligase (556 aa).

The short motif at 132–142 (ANPTGNLHLGH) is the 'HIGH' region element.

Belongs to the class-I aminoacyl-tRNA synthetase family. Monomer.

Its subcellular location is the cytoplasm. It catalyses the reaction tRNA(Arg) + L-arginine + ATP = L-arginyl-tRNA(Arg) + AMP + diphosphate. This Bacillus licheniformis (strain ATCC 14580 / DSM 13 / JCM 2505 / CCUG 7422 / NBRC 12200 / NCIMB 9375 / NCTC 10341 / NRRL NRS-1264 / Gibson 46) protein is Arginine--tRNA ligase.